The following is a 106-amino-acid chain: Phosphoribosyl-ATP pyrophosphatase (106 aa).

It belongs to the PRA-PH family.

The protein localises to the cytoplasm. The enzyme catalyses 1-(5-phospho-beta-D-ribosyl)-ATP + H2O = 1-(5-phospho-beta-D-ribosyl)-5'-AMP + diphosphate + H(+). Its pathway is amino-acid biosynthesis; L-histidine biosynthesis; L-histidine from 5-phospho-alpha-D-ribose 1-diphosphate: step 2/9. The chain is Phosphoribosyl-ATP pyrophosphatase from Limosilactobacillus fermentum (strain NBRC 3956 / LMG 18251) (Lactobacillus fermentum).